We begin with the raw amino-acid sequence, 404 residues long: MSHKIMAINAGSSSLKFQLLAMPQGEMICQGLIERIGMANARVTMKTSAQKWQETAPIADHRESVTLLLDKLLSHHIINTLQDIDGVGHRVAHGGEFFKDSARVTDETLAQIERLAELAPLHNPVNALGIHIFRQLLPSTPSVAVFDTAFHQTLDESAYIYPLPWRYYTELGIRRYGFHGTSHKYVSTALAERLGVPLSALRVICCHLGNGSSICAIKGGQSVNTSMGFTPQSGVMMGTRSGDIDPSILPWIAEREGKTPQQLNYLLNNESGLLGISGVSHDYRDVEQAADGGNRRAALALTLFAERIRATIGSYIMQMGGLDALIFTGGIGENSARARAAVCHNLHFLGLSIDEEKNLRNATFIQAENAVVKVAVINTNEELMIAQDVMRIALSDKVTFGVSA.

The protein belongs to the acetokinase family. PduW subfamily.

The protein localises to the cytoplasm. The enzyme catalyses propanoate + ATP = propanoyl phosphate + ADP. It functions in the pathway polyol metabolism; 1,2-propanediol degradation. Works with phosphate acetyltransferase (pta) to capture exogenous propionate and regenerate propionyl-CoA during degradation of 1,2-propanediol (1,2-PD). This is Propionate kinase from Citrobacter koseri (strain ATCC BAA-895 / CDC 4225-83 / SGSC4696).